The primary structure comprises 357 residues: Methylthioribose-1-phosphate isomerase (357 aa).

Substrate is bound by residues 49-51, Arg89, and Gln197; that span reads RGA. Catalysis depends on Asp238, which acts as the Proton donor. Position 248-249 (248-249) interacts with substrate; that stretch reads NK.

This sequence belongs to the eIF-2B alpha/beta/delta subunits family. MtnA subfamily.

It carries out the reaction 5-(methylsulfanyl)-alpha-D-ribose 1-phosphate = 5-(methylsulfanyl)-D-ribulose 1-phosphate. It functions in the pathway amino-acid biosynthesis; L-methionine biosynthesis via salvage pathway; L-methionine from S-methyl-5-thio-alpha-D-ribose 1-phosphate: step 1/6. Its function is as follows. Catalyzes the interconversion of methylthioribose-1-phosphate (MTR-1-P) into methylthioribulose-1-phosphate (MTRu-1-P). This Leptospira biflexa serovar Patoc (strain Patoc 1 / Ames) protein is Methylthioribose-1-phosphate isomerase.